The chain runs to 225 residues: Cytidylate kinase (225 aa).

11–19 (GPAAAGKST) lines the ATP pocket.

It belongs to the cytidylate kinase family. Type 1 subfamily.

The protein resides in the cytoplasm. It catalyses the reaction CMP + ATP = CDP + ADP. It carries out the reaction dCMP + ATP = dCDP + ADP. The protein is Cytidylate kinase of Bacillus cereus (strain AH187).